A 28-amino-acid polypeptide reads, in one-letter code: Cruzioseptin-4 (28 aa).

Residue glutamate 25 is modified to Glutamic acid 1-amide. The propeptide occupies 27–28 (EH).

As to expression, expressed by the skin glands.

The protein localises to the secreted. Has antimicrobial activity. The protein is Cruzioseptin-4 of Cruziohyla calcarifer (Splendid leaf frog).